Reading from the N-terminus, the 661-residue chain is Cartilage acidic protein 1 (661 aa).

An N-terminal signal peptide occupies residues 1 to 27 (MAPSADPGMSRMLPFLLLLWFLPITEG). An FG-GAP 1; atypical repeat occupies 46–88 (DYDSNPTQLNYGVAVTDVDHDGDFEIVVAGYNGPNLVLKYDRA). The FG-GAP 2; atypical repeat unit spans residues 105–147 (YALRDRQGNAIGVTACDIDGDGREEIYFLNTNNAFSGVATYTD). The stretch at 283–333 (AGVDDPHQHGRGVALADFNRDGKVDIVYGNWNGPHRLYLQMSTHGKVRFRD) is one FG-GAP 3; atypical repeat. One copy of the FG-GAP 4; atypical repeat lies at 395–437 (GDALEPEGRGTGGVVTDFDGDGMLDLILSHGESMAQPLSVFRG). Positions 559–605 (DTNECIQFPFVCPRDKPVCVNTYGSYRCRTNKKCSRGYEPNEDGTAC) constitute an EGF-like domain. Disulfide bonds link C563–C577, C570–C586, and C592–C605. T608, T618, T619, T621, and T626 each carry an O-linked (GalNAc...) threonine glycan.

Post-translationally, O-glycosylated. In terms of tissue distribution, expressed in the interterritorial matrix of articular deep zone cartilage (at protein level). Isoform 1 and isoform 2 are expressed in brain. Isoform 1 is detected in lung and chondrocytes. Detected in cartilage, bone, cultured chondrocytes and lung, and at low levels in heart. Not detected in osteoblasts.

It localises to the secreted. The protein localises to the extracellular space. The protein resides in the extracellular matrix. The chain is Cartilage acidic protein 1 (CRTAC1) from Homo sapiens (Human).